A 503-amino-acid polypeptide reads, in one-letter code: UDP-N-acetylmuramoylalanine--D-glutamate ligase (503 aa).

129 to 135 (GTNGKTT) contacts ATP.

The protein belongs to the MurCDEF family.

The protein localises to the cytoplasm. The catalysed reaction is UDP-N-acetyl-alpha-D-muramoyl-L-alanine + D-glutamate + ATP = UDP-N-acetyl-alpha-D-muramoyl-L-alanyl-D-glutamate + ADP + phosphate + H(+). It functions in the pathway cell wall biogenesis; peptidoglycan biosynthesis. In terms of biological role, cell wall formation. Catalyzes the addition of glutamate to the nucleotide precursor UDP-N-acetylmuramoyl-L-alanine (UMA). The chain is UDP-N-acetylmuramoylalanine--D-glutamate ligase from Burkholderia orbicola (strain MC0-3).